The chain runs to 313 residues: Porphobilinogen deaminase (313 aa).

S-(dipyrrolylmethanemethyl)cysteine is present on Cys-242.

It belongs to the HMBS family. Monomer. Dipyrromethane is required as a cofactor.

It catalyses the reaction 4 porphobilinogen + H2O = hydroxymethylbilane + 4 NH4(+). The protein operates within porphyrin-containing compound metabolism; protoporphyrin-IX biosynthesis; coproporphyrinogen-III from 5-aminolevulinate: step 2/4. Tetrapolymerization of the monopyrrole PBG into the hydroxymethylbilane pre-uroporphyrinogen in several discrete steps. This chain is Porphobilinogen deaminase, found in Pseudomonas fluorescens (strain ATCC BAA-477 / NRRL B-23932 / Pf-5).